The chain runs to 159 residues: Transcription elongation factor A protein-like 1 (159 aa).

A disordered region spans residues 1–121; the sequence is MDKPRKENEE…QFKGDIHGRN (121 aa). Residues 17-34 show a composition bias toward basic and acidic residues; it reads KTDEERPPVEHSPEKQSP. Acidic residues predominate over residues 37–54; the sequence is QSSEEQSSEEEFFPEELL. Basic and acidic residues-rich tracts occupy residues 64–80 and 95–119; these read SEER…DLFE and HKLE…DIHG.

Belongs to the TFS-II family. TFA subfamily.

It localises to the nucleus. Functionally, may be involved in transcriptional regulation. Modulates various viral and cellular promoters in a promoter context-dependent manner. Does not bind DNA directly. This is Transcription elongation factor A protein-like 1 from Gorilla gorilla gorilla (Western lowland gorilla).